Consider the following 70-residue polypeptide: U2-agatoxin-Ao1l (70 aa).

Positions 1 to 20 are cleaved as a signal peptide; it reads MRAIISLLLISAMVFSIIEA. The propeptide occupies 21–34; that stretch reads VPEEEGLQLSEDER. 3 disulfides stabilise this stretch: Cys-37-Cys-53, Cys-44-Cys-58, and Cys-52-Cys-68. Leu-69 is modified (leucine amide).

The protein belongs to the neurotoxin 01 (U2-agtx) family. Expressed by the venom gland.

The protein resides in the secreted. Functionally, insect active toxin causing rapid but reversible paralysis in crickets. No activity shown in mammals. Does not show effect on mammalian voltage-gated calcium channels. This chain is U2-agatoxin-Ao1l, found in Agelena orientalis (Funnel-web spider).